A 242-amino-acid chain; its full sequence is NLP effector protein 8 (242 aa).

The N-terminal stretch at 1-17 (MHLTVFYLVALCTFASA) is a signal peptide. Residues 108-118 (AIMYAWYFPRD) carry the Conserved undecapeptide motif motif. Residues 127–133 (GHRNAWE) carry the Conserved heptapeptide motif motif. An N-linked (GlcNAc...) asparagine glycan is attached at N206.

Belongs to the Necrosis inducing protein (NPP1) family.

It is found in the secreted. In terms of biological role, probable secreted effector that may act as a pathogen-associated molecular pattern (PAMP) recognized by the plant immune system. The polypeptide is NLP effector protein 8 (Plasmopara viticola (Downy mildew of grapevine)).